Here is a 711-residue protein sequence, read N- to C-terminus: Ribosomal RNA large subunit methyltransferase K/L (711 aa).

The region spanning 43-154 (LAYRITLWTR…NGVITIAMNF (112 aa)) is the THUMP domain.

The protein belongs to the methyltransferase superfamily. RlmKL family.

It localises to the cytoplasm. It catalyses the reaction guanosine(2445) in 23S rRNA + S-adenosyl-L-methionine = N(2)-methylguanosine(2445) in 23S rRNA + S-adenosyl-L-homocysteine + H(+). The enzyme catalyses guanosine(2069) in 23S rRNA + S-adenosyl-L-methionine = N(2)-methylguanosine(2069) in 23S rRNA + S-adenosyl-L-homocysteine + H(+). In terms of biological role, specifically methylates the guanine in position 2445 (m2G2445) and the guanine in position 2069 (m7G2069) of 23S rRNA. The sequence is that of Ribosomal RNA large subunit methyltransferase K/L from Shewanella oneidensis (strain ATCC 700550 / JCM 31522 / CIP 106686 / LMG 19005 / NCIMB 14063 / MR-1).